A 102-amino-acid polypeptide reads, in one-letter code: Small ribosomal subunit protein uS10 (102 aa).

It belongs to the universal ribosomal protein uS10 family. In terms of assembly, part of the 30S ribosomal subunit.

Its function is as follows. Involved in the binding of tRNA to the ribosomes. The chain is Small ribosomal subunit protein uS10 from Enterococcus faecalis (strain ATCC 700802 / V583).